We begin with the raw amino-acid sequence, 193 residues long: MRGRDEETGEFRGASRSQQRREALEIFDLGEKLVALTPAQLAKLPVPESLIPHIEESKRITSHIAHKRQLAFLAKHMRREDEQTLAAIRDALDANSDTARREVAAIHRVERWRERLLAEGDVALAELLEAYPAADRQQLRQLVRNAIHERAKNKPPRAYRELFQVLRDLSQEQGLESGDSELEDGESASEDDE.

Positions 1–10 (MRGRDEETGE) are enriched in basic and acidic residues. 2 disordered regions span residues 1-20 (MRGRDEETGEFRGASRSQQR) and 171-193 (QEQGLESGDSELEDGESASEDDE). A compositionally biased stretch (acidic residues) spans 178–193 (GDSELEDGESASEDDE).

The protein belongs to the DarP family.

It localises to the cytoplasm. Member of a network of 50S ribosomal subunit biogenesis factors which assembles along the 30S-50S interface, preventing incorrect 23S rRNA structures from forming. Promotes peptidyl transferase center (PTC) maturation. In Xanthomonas axonopodis pv. citri (strain 306), this protein is Dual-action ribosomal maturation protein DarP.